Consider the following 268-residue polypeptide: Myeloid leukemia factor 1 (268 aa).

A phosphoserine mark is found at Ser8, Ser32, and Ser34. Disordered stretches follow at residues 44–66 (ISDG…SLTH) and 209–268 (GRHN…SNKK). Residues 50-125 (RAHNRRGHND…IGDEPPKVFQ (76 aa)) form an interaction with COPS3 region. Composition is skewed to basic and acidic residues over residues 56-65 (GHNDGEDSLT) and 226-237 (PGSRELKRREKP).

It belongs to the MLF family. As to quaternary structure, interacts with CENPU. Also interacts with NRBP1/MADM, YWHAZ/14-3-3-zeta and HNRPUL2/MANP. NRBP1 recruits a serine kinase which phosphorylates both itself and MLF1. Phosphorylated MLF1 then binds to YWHAZ and is retained in the cytoplasm. Retained in the nucleus by binding to HNRPUL2. Binds to COPS3/CSN3 which is required for suppression of COP1 and activation of p53. Post-translationally, phosphorylation is required for binding to YWHAZ. In terms of tissue distribution, most abundant in testis, ovary, skeletal muscle, heart, kidney and colon. Low expression in spleen, thymus and peripheral blood leukocytes.

The protein localises to the cytoplasm. It localises to the nucleus. The protein resides in the cell projection. Its subcellular location is the cilium. It is found in the cytoskeleton. The protein localises to the cilium basal body. Its function is as follows. Involved in lineage commitment of primary hemopoietic progenitors by restricting erythroid formation and enhancing myeloid formation. Interferes with erythropoietin-induced erythroid terminal differentiation by preventing cells from exiting the cell cycle through suppression of CDKN1B/p27Kip1 levels. Suppresses COP1 activity via CSN3 which activates p53 and induces cell cycle arrest. Binds DNA and affects the expression of a number of genes so may function as a transcription factor in the nucleus. This Homo sapiens (Human) protein is Myeloid leukemia factor 1 (MLF1).